A 428-amino-acid chain; its full sequence is 3-oxo-tetronate kinase (428 aa).

ATP-binding positions include Ser-267, 365–368 (GGET), and Gly-409.

It belongs to the four-carbon acid sugar kinase family.

The catalysed reaction is 3-dehydro-L-erythronate + ATP = 3-dehydro-4-O-phospho-L-erythronate + ADP + H(+). The enzyme catalyses 3-dehydro-D-erythronate + ATP = 3-dehydro-4-O-phospho-D-erythronate + ADP + H(+). In terms of biological role, catalyzes the ATP-dependent phosphorylation of 3-oxo-tetronate to 3-oxo-tetronate 4-phosphate. This Burkholderia multivorans (strain ATCC 17616 / 249) protein is 3-oxo-tetronate kinase.